A 578-amino-acid polypeptide reads, in one-letter code: Solute carrier family 15 member 3 (578 aa).

Positions 1 to 15 are enriched in basic and acidic residues; that stretch reads MSAPRAEEQPSRSGE. A disordered region spans residues 1–27; the sequence is MSAPRAEEQPSRSGERQPLVARGPRGP. A run of 5 helical transmembrane segments spans residues 33-53, 77-97, 102-122, 155-175, and 201-221; these read TAAA…FGVT, LLFL…ADVY, LTIS…LTTI, PYCA…ASSV, and WFYW…AFIE. A glycan (N-linked (GlcNAc...) asparagine) is linked at Asn223. A helical transmembrane segment spans residues 232-252; that stretch reads IIVGLVGLAFFIFLFATPVFI. The tract at residues 280-301 is disordered; sequence SRDSESAHLLPDQRSNQPGPSP. The chain crosses the membrane as a helical span at residues 308 to 328; sequence FQVLVKILPVMVTLVPYWMVY. Residue Asn353 is glycosylated (N-linked (GlcNAc...) asparagine). 2 helical membrane passes run 367-387 and 405-425; these read IPEA…IPVK and LQKM…AGVL. N-linked (GlcNAc...) asparagine glycosylation is present at Asn436. Transmembrane regions (helical) follow at residues 462–481, 494–514, and 538–558; these read YLLI…EFAY, GIFF…VALL, and YFFL…WIAG.

This sequence belongs to the major facilitator superfamily. Proton-dependent oligopeptide transporter (POT/PTR) (TC 2.A.17) family. In terms of tissue distribution, expressed highly in bone marrow derived macrophages, and weakly in spleen and lung. Expressed in plasmacytoid dendritic cells (pDCs) in response to toll-like receptors (TLR) stimulation.

It is found in the lysosome membrane. Its subcellular location is the endosome membrane. It catalyses the reaction N-acetyl-D-muramoyl-L-alanyl-D-isoglutamine(out) + n H(+)(out) = N-acetyl-D-muramoyl-L-alanyl-D-isoglutamine(in) + n H(+)(in). The catalysed reaction is glycylglycylglycine(out) + n H(+)(out) = glycylglycylglycine(in) + n H(+)(in). It carries out the reaction carnosine(out) + n H(+)(out) = carnosine(in) + n H(+)(in). The enzyme catalyses L-histidine(out) + n H(+)(out) = L-histidine(in) + n H(+)(in). Its function is as follows. Proton-coupled amino-acid transporter that transports free histidine and certain di- and tripeptides, and is involved in innate immune response. Also able to transport carnosine. Involved in the detection of microbial pathogens by toll-like receptors (TLRs) and NOD-like receptors (NLRs), probably by mediating transport of bacterial peptidoglycans across the endolysosomal membrane: catalyzes the transport of certain bacterial peptidoglycans, such as muramyl dipeptide (MDP), the NOD2 ligand. The protein is Solute carrier family 15 member 3 of Mus musculus (Mouse).